A 90-amino-acid chain; its full sequence is Small ribosomal subunit protein uS15 (90 aa).

This sequence belongs to the universal ribosomal protein uS15 family. In terms of assembly, part of the 30S ribosomal subunit. Forms a bridge to the 50S subunit in the 70S ribosome, contacting the 23S rRNA.

In terms of biological role, one of the primary rRNA binding proteins, it binds directly to 16S rRNA where it helps nucleate assembly of the platform of the 30S subunit by binding and bridging several RNA helices of the 16S rRNA. Functionally, forms an intersubunit bridge (bridge B4) with the 23S rRNA of the 50S subunit in the ribosome. The protein is Small ribosomal subunit protein uS15 of Wolbachia sp. subsp. Drosophila simulans (strain wRi).